The sequence spans 209 residues: 3-dehydroquinate dehydratase (209 aa).

3-dehydroquinate-binding positions include S6, 25–27, and R55; that span reads ELR. Residue H109 is the Proton donor/acceptor of the active site. K134 (schiff-base intermediate with substrate) is an active-site residue. Residues R172 and Q195 each contribute to the 3-dehydroquinate site.

Belongs to the type-I 3-dehydroquinase family. Homodimer.

The catalysed reaction is 3-dehydroquinate = 3-dehydroshikimate + H2O. It functions in the pathway metabolic intermediate biosynthesis; chorismate biosynthesis; chorismate from D-erythrose 4-phosphate and phosphoenolpyruvate: step 3/7. In terms of biological role, involved in the third step of the chorismate pathway, which leads to the biosynthesis of aromatic amino acids. Catalyzes the cis-dehydration of 3-dehydroquinate (DHQ) and introduces the first double bond of the aromatic ring to yield 3-dehydroshikimate. This chain is 3-dehydroquinate dehydratase, found in Methanoregula boonei (strain DSM 21154 / JCM 14090 / 6A8).